A 288-amino-acid chain; its full sequence is MEKYHGLEKIGEGTYGVVYKAQNSDGESFALKKIRLEKEDEGIPSTAIREISILKELRHSNIVKLYDVIHAKKRLILVFEHLDQDLKKLIDVCDGGLESVTAKSFLLQLLNGIAYCHEHRVLHRDLKPQNLLINREGELKIADFGLARAFGIPARRYTHEVVTLWYRAPDILMGSKKYSTPIDIWSVGCIFAEMVNGRPLFPGASETDQLMRIFKILGTPNSQNWPDVFKLPKYDPNFPVYNPLPWETFIKGLDDTGIDLLSKMLKLDPNQRITAKQAIEHPYFKETN.

One can recognise a Protein kinase domain in the interval Y4–F284. ATP contacts are provided by residues I10–V18 and K32. The residue at position 14 (T14) is a Phosphothreonine. Y15 is modified (phosphotyrosine). The active-site Proton acceptor is the D125. Residue T158 is modified to Phosphothreonine.

This sequence belongs to the protein kinase superfamily. CMGC Ser/Thr protein kinase family. CDC2/CDKX subfamily. In terms of assembly, may form a complex composed of at least the catalytic subunit CRK2 and a cyclin. Mg(2+) serves as cofactor.

It localises to the cytoplasm. The enzyme catalyses L-seryl-[protein] + ATP = O-phospho-L-seryl-[protein] + ADP + H(+). It carries out the reaction L-threonyl-[protein] + ATP = O-phospho-L-threonyl-[protein] + ADP + H(+). The catalysed reaction is [DNA-directed RNA polymerase] + ATP = phospho-[DNA-directed RNA polymerase] + ADP + H(+). Its activity is regulated as follows. Phosphorylation at Thr-14 or Tyr-15 inactivates the enzyme, while phosphorylation at Thr-158 activates it. Functionally, serine/threonine-protein kinase. Involved in the control of the cell cycle. Required for entry into S-phase and mitosis. Probable component of the kinase complex that phosphorylates the repetitive C-terminus of RNA polymerase II. The chain is Cyclin-dependent kinase 2 homolog from Plasmodium berghei (strain Anka).